Reading from the N-terminus, the 328-residue chain is Alanine racemase (328 aa).

Lysine 33 acts as the Proton acceptor; specific for D-alanine in catalysis. An N6-(pyridoxal phosphate)lysine modification is found at lysine 33. Arginine 118 contributes to the substrate binding site. Catalysis depends on tyrosine 237, which acts as the Proton acceptor; specific for L-alanine. Methionine 283 lines the substrate pocket.

This sequence belongs to the alanine racemase family. It depends on pyridoxal 5'-phosphate as a cofactor.

It catalyses the reaction L-alanine = D-alanine. It functions in the pathway amino-acid biosynthesis; D-alanine biosynthesis; D-alanine from L-alanine: step 1/1. Catalyzes the interconversion of L-alanine and D-alanine. May also act on other amino acids. The chain is Alanine racemase (alr) from Campylobacter jejuni subsp. jejuni serotype O:2 (strain ATCC 700819 / NCTC 11168).